Here is a 439-residue protein sequence, read N- to C-terminus: Histidinol dehydrogenase (439 aa).

Residues Y127, Q185, and N208 each coordinate NAD(+). Positions 234, 256, and 259 each coordinate substrate. Zn(2+)-binding residues include Q256 and H259. Catalysis depends on proton acceptor residues E323 and H324. Residues H324, D357, E411, and H416 each contribute to the substrate site. D357 contacts Zn(2+). H416 serves as a coordination point for Zn(2+).

Belongs to the histidinol dehydrogenase family. Zn(2+) serves as cofactor.

The catalysed reaction is L-histidinol + 2 NAD(+) + H2O = L-histidine + 2 NADH + 3 H(+). The protein operates within amino-acid biosynthesis; L-histidine biosynthesis; L-histidine from 5-phospho-alpha-D-ribose 1-diphosphate: step 9/9. In terms of biological role, catalyzes the sequential NAD-dependent oxidations of L-histidinol to L-histidinaldehyde and then to L-histidine. The chain is Histidinol dehydrogenase from Aliivibrio fischeri (strain ATCC 700601 / ES114) (Vibrio fischeri).